The following is an 887-amino-acid chain: MGEAEKFHYIYSCDLDINVQLKIGSLEGKREQKSYKAVLEDPMLKFSGLYQETCSDLYVTCQVFAEGKPLALPVRTSYKPFSTRWNWNEWLKLPVKYPDLPRNAQVALTIWDVYGPGRAVPVGGTTVSLFGKYGMFRQGMHDLKVWPNVEADGSEPTRTPGRTSSTLSEDQMSRLAKLTKAHRQGHMVKVDWLDRLTFREIEMINESEKRSSNFMYLMVEFRCVKCDDKEYGIVYYEKDGDESSPILTSFELVKVPDPQMSMENLVESKHHKLARSLRSGPSDHDLKPNATTRDQLNIIVSYPPTKQLTYEEQDLVWKFRYYLTNQEKALTKFLKCVNWDLPQEAKQALELLGKWKPMDVEDSLELLSSHYTNPTVRRYAVARLRQADDEDLLMYLLQLVQALKYENFDDIKNGLEPTKKDSQASVSESLSSSGVSSADIDSSQIITNPLPPVASPPPASKSKEVSDGENLEQDLCTFLISRACKNSTLANYLYWYVIVECEDQDTQQRDPKTHEMYLNVMRRFSQALLKGDKSVRVMRSLLAAQQTFVDRLVHLMKAVQRESGNRKKKNERLQALLGDNEKMNLSDVELIPLPLEPQVKIRGIIPETATLFKSALMPAQLFFKTEDGGKYPVIFKHGDDLRQDQLILQIISLMDKLLRKENLDLKLTPYKVLATSTKHGFMQFIQSVPVAEVLDTEGSIQNFFRKYAPSETGPNGISAEVMDTYVKSCAGYCVITYILGVGDRHLDNLLLTKTGKLFHIDFGYILGRDPKPLPPPMKLNKEMVEGMGGTQSEQYQEFRKQCYTAFLHLRRYSNLILNLFSLMVDANIPDIALEPDKTVKKVQDKFRLDLSDEEAVHYMQSLIDESVHALFAAVVEQIHKFAQYWRK.

One can recognise a C2 PI3K-type domain in the interval Y35–Q184. The interval V149–D170 is disordered. Polar residues predominate over residues P156–D170. T163 is modified (phosphothreonine; by AMPK). S165 carries the phosphoserine; by AMPK modification. 3 positions are modified to phosphoserine: S244, S261, and S282. A PIK helical domain is found at D283 to V520. Positions E416–D467 are disordered. Residues Q423 to Q444 are compositionally biased toward low complexity. The span at P449–A459 shows a compositional bias: pro residues. One can recognise a PI3K/PI4K catalytic domain in the interval I605–F871. The segment at L611–M617 is G-loop. The segment at G740 to N748 is catalytic loop. The segment at H759 to N780 is activation loop.

It belongs to the PI3/PI4-kinase family. As to quaternary structure, component of the PI3K (PI3KC3/PI3K-III/class III phosphatidylinositol 3-kinase) complex the core of which is composed of the catalytic subunit PIK3C3, the regulatory subunit PIK3R4 and BECN1 associating with additional regulatory/auxiliary subunits to form alternative complex forms. Alternative complex forms containing a fourth regulatory subunit in a mutually exclusive manner are: the PI3K complex I (PI3KC3-C1) containing ATG14, and the PI3K complex II (PI3KC3-C2) containing UVRAG. PI3KC3-C1 displays a V-shaped architecture with PIK3R4 serving as a bridge between PIK3C3 and the ATG14:BECN1 subcomplex. Both, PI3KC3-C1 and PI3KC3-C2, can associate with further regulatory subunits such as RUBCN, SH3GLB1/Bif-1 and AMBRA1. PI3KC3-C1 probably associates with PIK3CB. Interacts with RAB7A in the presence of PIK3R4. Interacts with AMBRA1. Interacts with BECN1P1/BECN2. Interacts with SLAMF1. May interact with DYN2. May be a component of a complex composed of RAB5A (in GDP-bound form), DYN2 and PIK3C3. Interacts with NCKAP1L. Interacts with ATG14; this interaction is increased in the absence of TMEM39A. Interacts with STEEP1; the interaction is STING1-dependent and required for trafficking of STING1 from the endoplasmic reticulum. Interacts with YWHAG. Interacts with ARMC3. Mn(2+) is required as a cofactor. In terms of processing, ubiquitinated via 'Lys-29'- and 'Lys-48'-linked ubiquitination by UBE3C, promoting its degradation. Deubiquitination by ZRANB1/TRABID promotes its stabilization, leading to autophagosome maturation.

The protein localises to the midbody. The protein resides in the late endosome. Its subcellular location is the cytoplasmic vesicle. It localises to the autophagosome. It catalyses the reaction a 1,2-diacyl-sn-glycero-3-phospho-(1D-myo-inositol) + ATP = a 1,2-diacyl-sn-glycero-3-phospho-(1D-myo-inositol-3-phosphate) + ADP + H(+). In terms of biological role, catalytic subunit of the PI3K complex that mediates formation of phosphatidylinositol 3-phosphate; different complex forms are believed to play a role in multiple membrane trafficking pathways: PI3KC3-C1 is involved in initiation of autophagosomes and PI3KC3-C2 in maturation of autophagosomes and endocytosis. As part of PI3KC3-C1, promotes endoplasmic reticulum membrane curvature formation prior to vesicle budding. Involved in regulation of degradative endocytic trafficking and required for the abscission step in cytokinesis, probably in the context of PI3KC3-C2. Involved in the transport of lysosomal enzyme precursors to lysosomes. Required for transport from early to late endosomes. The chain is Phosphatidylinositol 3-kinase catalytic subunit type 3 from Rattus norvegicus (Rat).